The sequence spans 132 residues: Neurophysin 2 (132 aa).

Disulfide bonds link Cys10–Cys54, Cys13–Cys27, Cys21–Cys44, Cys28–Cys34, Cys61–Cys73, Cys67–Cys85, and Cys74–Cys79.

The protein belongs to the vasopressin/oxytocin family.

It localises to the secreted. Neurophysin 2 specifically binds vasopressin. The sequence is that of Neurophysin 2 from Struthio camelus (Common ostrich).